Reading from the N-terminus, the 225-residue chain is NAD(P)H-quinone oxidoreductase subunit K, chloroplastic (225 aa).

[4Fe-4S] cluster-binding residues include Cys-43, Cys-44, Cys-108, and Cys-139.

Belongs to the complex I 20 kDa subunit family. NDH is composed of at least 16 different subunits, 5 of which are encoded in the nucleus. The cofactor is [4Fe-4S] cluster.

Its subcellular location is the plastid. The protein localises to the chloroplast thylakoid membrane. It catalyses the reaction a plastoquinone + NADH + (n+1) H(+)(in) = a plastoquinol + NAD(+) + n H(+)(out). The catalysed reaction is a plastoquinone + NADPH + (n+1) H(+)(in) = a plastoquinol + NADP(+) + n H(+)(out). NDH shuttles electrons from NAD(P)H:plastoquinone, via FMN and iron-sulfur (Fe-S) centers, to quinones in the photosynthetic chain and possibly in a chloroplast respiratory chain. The immediate electron acceptor for the enzyme in this species is believed to be plastoquinone. Couples the redox reaction to proton translocation, and thus conserves the redox energy in a proton gradient. The protein is NAD(P)H-quinone oxidoreductase subunit K, chloroplastic of Arabidopsis thaliana (Mouse-ear cress).